The following is a 404-amino-acid chain: Probable tRNA sulfurtransferase (404 aa).

The THUMP domain maps to 60-165 (TAVAESLKQV…EEAAYLSYET (106 aa)). ATP contacts are provided by residues 183 to 184 (ML), 208 to 209 (HF), Arg-265, Gly-287, and Gln-296.

It belongs to the ThiI family.

The protein resides in the cytoplasm. The catalysed reaction is [ThiI sulfur-carrier protein]-S-sulfanyl-L-cysteine + a uridine in tRNA + 2 reduced [2Fe-2S]-[ferredoxin] + ATP + H(+) = [ThiI sulfur-carrier protein]-L-cysteine + a 4-thiouridine in tRNA + 2 oxidized [2Fe-2S]-[ferredoxin] + AMP + diphosphate. It catalyses the reaction [ThiS sulfur-carrier protein]-C-terminal Gly-Gly-AMP + S-sulfanyl-L-cysteinyl-[cysteine desulfurase] + AH2 = [ThiS sulfur-carrier protein]-C-terminal-Gly-aminoethanethioate + L-cysteinyl-[cysteine desulfurase] + A + AMP + 2 H(+). It functions in the pathway cofactor biosynthesis; thiamine diphosphate biosynthesis. Catalyzes the ATP-dependent transfer of a sulfur to tRNA to produce 4-thiouridine in position 8 of tRNAs, which functions as a near-UV photosensor. Also catalyzes the transfer of sulfur to the sulfur carrier protein ThiS, forming ThiS-thiocarboxylate. This is a step in the synthesis of thiazole, in the thiamine biosynthesis pathway. The sulfur is donated as persulfide by IscS. This Streptococcus pneumoniae serotype 2 (strain D39 / NCTC 7466) protein is Probable tRNA sulfurtransferase.